Consider the following 167-residue polypeptide: Secreted LysM effector Blys6 (167 aa).

The N-terminal stretch at 1–16 (MKGLCVAACTLVLAAA) is a signal peptide. In terms of domain architecture, LysM spans 109 to 162 (KWYRIRRGDDCGPVASEFGISADQLIEWNPWLSADVDGTHYPCMNIWPTDNLCV).

It belongs to the secreted LysM effector family.

Its function is as follows. Might have a role in sequestration of chitin oligosaccharides (breakdown products of fungal cell walls that are released during invasion and act as triggers of host immunity) to dampen host defense. The protein is Secreted LysM effector Blys6 of Beauveria bassiana (strain ARSEF 2860) (White muscardine disease fungus).